The chain runs to 706 residues: Forkhead box protein P2 (706 aa).

The span at 1-28 shows a compositional bias: polar residues; the sequence is MMQESATETISNSSMNQNGMSTLSSQLD. Disordered stretches follow at residues 1-45 and 275-305; these read MMQE…SEVS and IKHG…ITHH. Over residues 287-296 the composition is skewed to low complexity; it reads SSSTTSTTTS. The segment at 337 to 362 adopts a C2H2-type zinc-finger fold; it reads GVCKWPGCENICEDFGQFLKHLNNEH. The tract at residues 379-400 is leucine-zipper; that stretch reads VQQLEIQLSKERERLQAMMTHL. The tract at residues 413–417 is ctbp1-binding; sequence PLNLV. The fork-head DNA-binding region spans 495–585; sequence RPPFTYATLI…SQKITASPTL (91 aa). A disordered region spans residues 672–706; sequence DDEDCPMSLVTTANHSPELEEDRELEEEPLSEDLE. The segment covering 690–706 has biased composition (acidic residues); the sequence is LEEDRELEEEPLSEDLE.

As to quaternary structure, dimerization is required for DNA-binding. At stage 15, expressed in the anterior/superior eye field and the caudal branchial arch. At later stages, expression persists in the retina and in the caudal branchial arch. Expressed in the pronephros and the tip of the tail. Beginning with stage 35, expression in the brain is localized to distinct subdomains of the anterior prosencephalon, the medial mesencephalon and to lateral domains of the hindbrain.

Its subcellular location is the nucleus. Its function is as follows. Transcriptional repressor. This chain is Forkhead box protein P2, found in Xenopus laevis (African clawed frog).